A 458-amino-acid chain; its full sequence is Putative long chain fatty acid-CoA ligase VraA (458 aa).

This sequence belongs to the ATP-dependent AMP-binding enzyme family.

This chain is Putative long chain fatty acid-CoA ligase VraA (vraA), found in Staphylococcus aureus (strain MRSA252).